A 519-amino-acid chain; its full sequence is Cytochrome P450 72C1 (519 aa).

The chain crosses the membrane as a helical span at residues 10-30 (VFLIGFLILILNWVWRAVNWV). A heme-binding site is contributed by cysteine 467.

The protein belongs to the cytochrome P450 family. Heme is required as a cofactor. As to expression, expressed in hypocotyls, roots, cotyledons, stamens and silique junctions.

Its subcellular location is the membrane. Functionally, atypical cytochrome P450 involved in brassinosteroids (BRs) inactivation and regulation of BRs homeostasis. Does not possess carbon 26 hydroxylase activity and may inactivate BRs by hydroxylation of carbons other than C-26. Acts in association with CYP734A1 to inactivate BRs and modulate photomorphogenesis. In Arabidopsis thaliana (Mouse-ear cress), this protein is Cytochrome P450 72C1 (CYP72C1).